Reading from the N-terminus, the 380-residue chain is Pectinesterase QRT1 (380 aa).

The first 26 residues, 1 to 26 (MKVEAFIPAVLLLCFGVMLCLKSSCA), serve as a signal peptide directing secretion. 2 N-linked (GlcNAc...) asparagine glycosylation sites follow: Asn-74 and Asn-137. Substrate-binding residues include Thr-164 and Gln-198. The active-site Proton donor is Asp-221. The N-linked (GlcNAc...) asparagine glycan is linked to Asn-227. Cys-235 and Cys-255 are oxidised to a cystine. Asp-242 serves as the catalytic Nucleophile. 2 residues coordinate substrate: Arg-298 and Trp-300. N-linked (GlcNAc...) asparagine glycosylation is present at Asn-302.

It belongs to the pectinesterase family. In terms of tissue distribution, expressed in flower buds, siliques, developing guard cells, floral nectares, at the stigmatic surface, in the hypocotyl-root transition zone and the area of lateral root emergence. Not expressed in mature leaves.

The protein localises to the secreted. It is found in the cell wall. It catalyses the reaction [(1-&gt;4)-alpha-D-galacturonosyl methyl ester](n) + n H2O = [(1-&gt;4)-alpha-D-galacturonosyl](n) + n methanol + n H(+). It participates in glycan metabolism; pectin degradation; 2-dehydro-3-deoxy-D-gluconate from pectin: step 1/5. Its function is as follows. Pectinesterase required for cell type-specific pectin degradation to separate microspores. In Arabidopsis thaliana (Mouse-ear cress), this protein is Pectinesterase QRT1.